Reading from the N-terminus, the 368-residue chain is Xaa-Pro dipeptidase (368 aa).

Mn(2+) contacts are provided by Asp-223, Asp-234, His-298, Glu-327, and Glu-341.

This sequence belongs to the peptidase M24B family. It depends on Mn(2+) as a cofactor.

The protein localises to the cytoplasm. The enzyme catalyses Xaa-L-Pro dipeptide + H2O = an L-alpha-amino acid + L-proline. The chain is Xaa-Pro dipeptidase (pepQ) from Lactobacillus delbrueckii subsp. lactis.